We begin with the raw amino-acid sequence, 145 residues long: Ribonuclease H (145 aa).

The 142-residue stretch at 2 to 143 folds into the RNase H type-1 domain; sequence SKKEVIIYTD…ADSLARKAII (142 aa). Residues Asp11, Glu49, Asp71, and Asp135 each contribute to the Mg(2+) site.

It belongs to the RNase H family. As to quaternary structure, monomer. Mg(2+) serves as cofactor.

The protein resides in the cytoplasm. It carries out the reaction Endonucleolytic cleavage to 5'-phosphomonoester.. Functionally, endonuclease that specifically degrades the RNA of RNA-DNA hybrids. The polypeptide is Ribonuclease H (Wolbachia pipientis wMel).